A 383-amino-acid chain; its full sequence is Homoserine O-acetyltransferase (383 aa).

The region spanning 52 to 362 (NAILVCHALT…PWGHDAFLLD (311 aa)) is the AB hydrolase-1 domain. S158 acts as the Nucleophile in catalysis. A substrate-binding site is contributed by R227. Residues D323 and H356 contribute to the active site. D357 contributes to the substrate binding site.

The protein belongs to the AB hydrolase superfamily. MetX family. As to quaternary structure, homodimer.

The protein localises to the cytoplasm. The enzyme catalyses L-homoserine + acetyl-CoA = O-acetyl-L-homoserine + CoA. It functions in the pathway amino-acid biosynthesis; L-methionine biosynthesis via de novo pathway; O-acetyl-L-homoserine from L-homoserine: step 1/1. Functionally, transfers an acetyl group from acetyl-CoA to L-homoserine, forming acetyl-L-homoserine. The protein is Homoserine O-acetyltransferase of Symbiobacterium thermophilum (strain DSM 24528 / JCM 14929 / IAM 14863 / T).